An 885-amino-acid chain; its full sequence is Chitin synthase 3 (885 aa).

Residues 1 to 59 (MASQYPGHQLDDIPSTNVYRPPPRHEDDEAEHALLHQNSAYQSQYDDPHSRPLTPGQES) are disordered. A compositionally biased stretch (basic and acidic residues) spans 23–34 (PRHEDDEAEHAL). A compositionally biased stretch (polar residues) spans 36-45 (HQNSAYQSQY). The next 6 membrane-spanning stretches (helical) occupy residues 565 to 585 (FFLH…WFSL), 620 to 640 (IINT…FILA), 650 to 670 (VAYI…IVLS), 707 to 727 (IVII…FLYM), 735 to 755 (SFAQ…IYAF), and 837 to 857 (LVAT…SDSL).

Belongs to the chitin synthase family. Class III subfamily.

It localises to the cell membrane. The enzyme catalyses [(1-&gt;4)-N-acetyl-beta-D-glucosaminyl](n) + UDP-N-acetyl-alpha-D-glucosamine = [(1-&gt;4)-N-acetyl-beta-D-glucosaminyl](n+1) + UDP + H(+). Polymerizes chitin, a structural polymer of the cell wall and septum, by transferring the sugar moiety of UDP-GlcNAc to the non-reducing end of the growing chitin polymer. Is not only stable at different pH, but is also able to tolerate a broad temperature range. With CHS2, plays an important role in virulence. The chain is Chitin synthase 3 from Exophiala dermatitidis (Black yeast-like fungus).